A 388-amino-acid polypeptide reads, in one-letter code: Succinyl-diaminopimelate desuccinylase (388 aa).

Position 71 (His-71) interacts with Zn(2+). The active site involves Asp-73. A Zn(2+)-binding site is contributed by Asp-104. Residue Glu-143 is the Proton acceptor of the active site. Positions 144, 172, and 361 each coordinate Zn(2+).

It belongs to the peptidase M20A family. DapE subfamily. In terms of assembly, homodimer. It depends on Zn(2+) as a cofactor. Co(2+) serves as cofactor.

The enzyme catalyses N-succinyl-(2S,6S)-2,6-diaminopimelate + H2O = (2S,6S)-2,6-diaminopimelate + succinate. The protein operates within amino-acid biosynthesis; L-lysine biosynthesis via DAP pathway; LL-2,6-diaminopimelate from (S)-tetrahydrodipicolinate (succinylase route): step 3/3. Its function is as follows. Catalyzes the hydrolysis of N-succinyl-L,L-diaminopimelic acid (SDAP), forming succinate and LL-2,6-diaminopimelate (DAP), an intermediate involved in the bacterial biosynthesis of lysine and meso-diaminopimelic acid, an essential component of bacterial cell walls. In Bradyrhizobium diazoefficiens (strain JCM 10833 / BCRC 13528 / IAM 13628 / NBRC 14792 / USDA 110), this protein is Succinyl-diaminopimelate desuccinylase.